Here is an 863-residue protein sequence, read N- to C-terminus: MQRRGALFGMPGGSGSRKMAAGDIGELLVPHMPTIRVPRSGDRVYKNECAFSYDSPNSEGGLYVCMNTFLAFGREHVERHFRKTGQSVYMHLKRHVREKVRGASGGALPKRRNSKMFLDLDTDDDLNSDDYEYEDEAKLVIFPDHYEIALPNIEELPALVTIACDAVLSSKSPYRKQDPDTWENELPVSKYANNLTQLDNGVRIPPSGWKCARCDLRENLWLNLTDGSVLCGKWFFDSSGGNGHALEHYRDTGYPLAVKLGTITPDGADVYSFQEEEAVLDPHLAKHLAHFGIDMLHMHGTENGLQDNDIKPRVSEWEVIQETGTKLKPMYGPGYTGLKNLGNSCYLSSVMQAIFSIPEFQRAYVGNLPRIFDYSPLDPTQDFNTQMTKLGHGLLSGQYSKPPVKSELIEQVMKEEHKPQQNGISPRMFKAFVSKSHPEFSSNRQQDAQEFFLHLVNLVERNRIGSENPSDVFRFLVEERIQCCQTRKVRYTERVDYLMQLPVAMEAATNKDELIAYELTRREAESNRRPLPELVRAKIPFSACLQAFSEPENVDDFWSSALQAKSAGVKTSRFASFPEYLVVQIKKFTFGLDWVPKKFDVSVDMPDLLDINHLRARGLQPGEEELPDISPPIVIPDDSKDRLMTQLIDPSDIDESSVMQLAEMGFPLEACRKAVYFTGNMGAEVAFNWIVVHMEEPDFAEPLTMPGYGGAASAGASVFGATGLDNQPPEETVAIITSMGFHRNQAIQALRATNSNLERALDWIFSHPEFEEDSDFVIEMENNANANIVSEAKPEGPRVKDGSGMYELFAFISHMGTSTMSGHYVCHIKKEGRWVIYNDHKVCASERPPKDLGYMYFYRRIPS.

Ser-114 carries the post-translational modification Phosphoserine. Thr-122 is modified (phosphothreonine). The UBP-type; degenerate zinc-finger motif lies at 187–295; the sequence is PVSKYANNLT…KHLAHFGIDM (109 aa). Zn(2+) is bound by residues Cys-211, Cys-214, Cys-231, and His-244. Lys-311 is covalently cross-linked (Glycyl lysine isopeptide (Lys-Gly) (interchain with G-Cter in SUMO2)). The USP domain maps to 336–861; the sequence is TGLKNLGNSC…LGYMYFYRRI (526 aa). Residue Cys-345 is the Nucleophile of the active site. Lys-405 participates in a covalent cross-link: Glycyl lysine isopeptide (Lys-Gly) (interchain with G-Cter in SUMO2). UBA domains lie at 652-693 and 727-767; these read DIDE…IVVH and QPPE…IFSH. The Proton acceptor role is filled by His-823.

Belongs to the peptidase C19 family. In terms of assembly, interacts with UFD1. Interacts (via UBA domains) with SIAH2 (when ubiquitinated). Interacts with BAG6; the interaction is direct and may mediate UBL4A deubiquitination. Interacts (via UBA 2 domain) with AMFR; the interaction is direct. Interacts with UBL4A; may be indirect via BAG6. Interacts with NEDD4.

The protein localises to the cytoplasm. The catalysed reaction is Thiol-dependent hydrolysis of ester, thioester, amide, peptide and isopeptide bonds formed by the C-terminal Gly of ubiquitin (a 76-residue protein attached to proteins as an intracellular targeting signal).. With respect to regulation, specifically inhibited by spautin-1 (specific and potent autophagy inhibitor-1), a derivative of MBCQ that binds to USP13 and inhibits deubiquitinase activity. Regulated by PIK3C3/VPS34-containing complexes. The weak deubiquitinase activity in vitro suggests the existence of some mechanism that activates the enzyme. Its function is as follows. Deubiquitinase that mediates deubiquitination of target proteins such as BECN1, MITF, SKP2 and USP10 and is involved in various processes such as autophagy, endoplasmic reticulum-associated degradation (ERAD), cell cycle progression or DNA damage response. Component of a regulatory loop that controls autophagy and p53/TP53 levels: mediates deubiquitination of BECN1, a key regulator of autophagy, leading to stabilize the PIK3C3/VPS34-containing complexes. Alternatively, forms with NEDD4 a deubiquitination complex, which subsequently stabilizes VPS34 to promote autophagy. Also deubiquitinates USP10, an essential regulator of p53/TP53 stability. In turn, PIK3C3/VPS34-containing complexes regulate USP13 stability, suggesting the existence of a regulatory system by which PIK3C3/VPS34-containing complexes regulate p53/TP53 protein levels via USP10 and USP13. Recruited by nuclear UFD1 and mediates deubiquitination of SKP2, thereby regulating endoplasmic reticulum-associated degradation (ERAD). Also regulates ERAD through the deubiquitination of UBL4A a component of the BAG6/BAT3 complex. Mediates stabilization of SIAH2 independently of deubiquitinase activity: binds ubiquitinated SIAH2 and acts by impairing SIAH2 autoubiquitination. Regulates the cell cycle progression by stabilizing cell cycle proteins such as SKP2 and AURKB. In addition, plays an important role in maintaining genomic stability and in DNA replication checkpoint activation via regulation of RAP80 and TOPBP1. Deubiquitinates the multifunctional protein HMGB1 and subsequently drives its nucleocytoplasmic localization and its secretion. Positively regulates type I and type II interferon signalings by deubiquitinating STAT1 but negatively regulates antiviral response by deubiquitinating STING1. The polypeptide is Ubiquitin carboxyl-terminal hydrolase 13 (USP13) (Bos taurus (Bovine)).